The primary structure comprises 244 residues: DNA polymerase sliding clamp (244 aa).

This sequence belongs to the PCNA family. As to quaternary structure, homotrimer. The subunits circularize to form a toroid; DNA passes through its center. Replication factor C (RFC) is required to load the toroid on the DNA.

Sliding clamp subunit that acts as a moving platform for DNA processing. Responsible for tethering the catalytic subunit of DNA polymerase and other proteins to DNA during high-speed replication. This chain is DNA polymerase sliding clamp, found in Methanothrix thermoacetophila (strain DSM 6194 / JCM 14653 / NBRC 101360 / PT) (Methanosaeta thermophila).